Here is a 431-residue protein sequence, read N- to C-terminus: Adenylosuccinate synthetase (431 aa).

GTP is bound by residues 13–19 and 41–43; these read GDEGKGK and GHT. Catalysis depends on Asp-14, which acts as the Proton acceptor. Residues Asp-14 and Gly-41 each coordinate Mg(2+). Residues 14-17, 39-42, Thr-130, Arg-144, Gln-225, Thr-240, and Arg-304 each bind IMP; these read DEGK and NAGH. The active-site Proton donor is His-42. 300 to 306 contacts substrate; that stretch reads AVTGRPR. Residues Arg-306, 332–334, and 415–417 each bind GTP; these read KLD and STG.

This sequence belongs to the adenylosuccinate synthetase family. As to quaternary structure, homodimer. Requires Mg(2+) as cofactor.

The protein resides in the cytoplasm. The enzyme catalyses IMP + L-aspartate + GTP = N(6)-(1,2-dicarboxyethyl)-AMP + GDP + phosphate + 2 H(+). The protein operates within purine metabolism; AMP biosynthesis via de novo pathway; AMP from IMP: step 1/2. Functionally, plays an important role in the de novo pathway of purine nucleotide biosynthesis. Catalyzes the first committed step in the biosynthesis of AMP from IMP. In Legionella pneumophila subsp. pneumophila (strain Philadelphia 1 / ATCC 33152 / DSM 7513), this protein is Adenylosuccinate synthetase.